The chain runs to 411 residues: Putative ion-transport protein YfeO (411 aa).

The next 11 membrane-spanning stretches (helical) occupy residues 9-29 (MLLL…VLIA), 54-74 (DSPF…GLII), 99-119 (ALPG…SLGP), 149-169 (ILAS…AALI), 186-206 (LFAP…FFHP), 223-243 (IASG…AVWC), 258-278 (VLIL…GGPL), 296-316 (LGAG…VIAA), 322-342 (GGRI…LHAH), 343-363 (VEAV…VLVV), and 386-406 (LLCI…LLAA).

The protein belongs to the chloride channel (TC 2.A.49) family.

It localises to the cell membrane. This Salmonella choleraesuis (strain SC-B67) protein is Putative ion-transport protein YfeO.